Reading from the N-terminus, the 1114-residue chain is MLSCLKEEMPPQELTRRLATVITHVDEIMQQEVRPLMAVEIIEQLHRQFAILSGGRGEDGAPIITFPEFSGFKHIPDEDFLNVMTYLTSIPSVEAASIGFIVVIDRRRDKWSSVKASLTRIAVAFPGNLQLIFILRPSRFIQRTFTDIGIKYYRNEFKTKVPIIMVNSVSDLHGYIDKSQLTRELGGTLEYRHGQWVNHRTAIENFALTLKTTAQMLQTFGSCLATAELPRSMLSTEDLLMSHTRQRDKLQDELKLLGKQGTTLLSCIQEPATKCPNSKLNLNQLENVTTMERLLVQLDETEKAFSHFWSEHHLKLNQCLQLQHFEHDFCKAKLALDNLLEEQAEFTGIGDSVMHVEQILKEHKKLEEKSQEPLEKAQLLALVGDQLIQSHHYAADAIRPRCVELRHLCDDFINGNKKKWDILGKSLEFHRQLDKVSQWCEAGIYLLASQAVDKCQSREGVDIALNDIATFLGTVKEYPLLSPKEFYNEFELLLTLDAKAKAQKVLQRLDDVQEIFHKRQVSLMKLAAKQTRPVQPVAPHPESSPKWVSSKTSQPSTSVPLARPLRTSEEPYTETELNSRGKEDDETKFEVKSEEIFESHHERGNPELEQQARLGDLSPRRRIIRDLLETEEIYIKEIKSIIDGYITPMDFIWLKHLIPDVLQNNKDFLFGNIRELYEFHNRTFLKELEKCAENPELLAHCFLKRKEDLQIYFKYHKNLPRARAIWQECQDCAYFGVCQRQLDHNLPLFKYLKGPSQRLIKYQMLLKGLLDFESPEDMEIDPGELGGSAKDGPKRTKDSAFSTELQQALAVIEDLIKSCELAVDLAAVTECPDDIGKLGKLLLHGPFSVWTIHKDRYKMKDLIRFKPSQRQIYLFERGIVFCKIRMEPGDQGLSPHYSFKKTMKLMTLSIRQLGRGSHRKFEIASRNGLEKYILQAASKEIRDCWFSEISKLLMEQQNNIKDQGNPQFEMSTSKGSGAGSGPWIKNMERATTSKEDPASSTGGIKGCSSREFSSMDTFEDCEGAEDMEKESSALSLAGLFQSDDSHETCSSKSAFLERGESSQGEKEERDEEETATRSTEEERAGASTGRLAPAGATAGFQARALRPRTSAQES.

The CRAL-TRIO domain occupies 11–193 (PQELTRRLAT…ELGGTLEYRH (183 aa)). Residues 323–428 (QHFEHDFCKA…KWDILGKSLE (106 aa)) form a Spectrin repeat. The interval 530–614 (QTRPVQPVAP…NPELEQQARL (85 aa)) is disordered. A compositionally biased stretch (polar residues) spans 546-559 (KWVSSKTSQPSTSV). A compositionally biased stretch (basic and acidic residues) spans 577-606 (LNSRGKEDDETKFEVKSEEIFESHHERGNP). Residues 619-822 (PRRRIIRDLL…EDLIKSCELA (204 aa)) enclose the DH domain. The region spanning 834–954 (DIGKLGKLLL…WFSEISKLLM (121 aa)) is the PH domain. Residues 962-975 (DQGNPQFEMSTSKG) are compositionally biased toward polar residues. A disordered region spans residues 962–1114 (DQGNPQFEMS…LRPRTSAQES (153 aa)). Residues 986–997 (NMERATTSKEDP) are compositionally biased toward basic and acidic residues. Acidic residues predominate over residues 1017–1028 (TFEDCEGAEDME). 2 stretches are compositionally biased toward basic and acidic residues: residues 1043–1067 (DDSH…GEKE) and 1074–1084 (TATRSTEEERA).

The protein belongs to the MCF2 family. As to expression, significantly expressed in brain and modestly in pancreas, brain and testis.

In terms of biological role, probably functions as a guanine nucleotide exchange factor. In Homo sapiens (Human), this protein is Probable guanine nucleotide exchange factor MCF2L2 (MCF2L2).